A 379-amino-acid chain; its full sequence is Sulfate adenylyltransferase (379 aa).

The protein belongs to the sulfate adenylyltransferase family.

The catalysed reaction is sulfate + ATP + H(+) = adenosine 5'-phosphosulfate + diphosphate. It participates in sulfur metabolism; hydrogen sulfide biosynthesis; sulfite from sulfate: step 1/3. The polypeptide is Sulfate adenylyltransferase (sat) (Pyrococcus abyssi (strain GE5 / Orsay)).